The sequence spans 445 residues: Phosphoglucosamine mutase (445 aa).

The active-site Phosphoserine intermediate is serine 102. The Mg(2+) site is built by serine 102, aspartate 241, aspartate 243, and aspartate 245. Serine 102 carries the phosphoserine modification.

Belongs to the phosphohexose mutase family. Mg(2+) is required as a cofactor. Post-translationally, activated by phosphorylation.

The enzyme catalyses alpha-D-glucosamine 1-phosphate = D-glucosamine 6-phosphate. Its function is as follows. Catalyzes the conversion of glucosamine-6-phosphate to glucosamine-1-phosphate. The chain is Phosphoglucosamine mutase from Salmonella choleraesuis (strain SC-B67).